The primary structure comprises 85 residues: Defensin-like protein 11 (85 aa).

The first 29 residues, 1–29 (MGKTISFSAIILVFLLVSTGLMKQGDAQA), serve as a signal peptide directing secretion. Cystine bridges form between Cys-32–Cys-84, Cys-44–Cys-68, Cys-54–Cys-75, and Cys-58–Cys-77.

Belongs to the DEFL family.

The protein resides in the secreted. The protein is Defensin-like protein 11 of Arabidopsis thaliana (Mouse-ear cress).